The primary structure comprises 856 residues: DNA mismatch repair protein MutS (856 aa).

Gly618 to Ser625 serves as a coordination point for ATP.

It belongs to the DNA mismatch repair MutS family.

In terms of biological role, this protein is involved in the repair of mismatches in DNA. It is possible that it carries out the mismatch recognition step. This protein has a weak ATPase activity. In Shewanella baltica (strain OS223), this protein is DNA mismatch repair protein MutS.